Reading from the N-terminus, the 263-residue chain is Shikimate dehydrogenase (NADP(+)) (263 aa).

Shikimate is bound by residues 16–18 and Thr65; that span reads SKS. Lys69 serves as the catalytic Proton acceptor. The shikimate site is built by Asn90 and Asp105. NADP(+) contacts are provided by residues 125-129, Ser181, and Leu208; that span reads GAGGS. Tyr210 is a shikimate binding site. Gly230 lines the NADP(+) pocket. Gln237 contributes to the shikimate binding site.

The protein belongs to the shikimate dehydrogenase family. Homodimer.

It carries out the reaction shikimate + NADP(+) = 3-dehydroshikimate + NADPH + H(+). Its pathway is metabolic intermediate biosynthesis; chorismate biosynthesis; chorismate from D-erythrose 4-phosphate and phosphoenolpyruvate: step 4/7. Functionally, involved in the biosynthesis of the chorismate, which leads to the biosynthesis of aromatic amino acids. Catalyzes the reversible NADPH linked reduction of 3-dehydroshikimate (DHSA) to yield shikimate (SA). The chain is Shikimate dehydrogenase (NADP(+)) from Helicobacter pylori (strain ATCC 700392 / 26695) (Campylobacter pylori).